A 289-amino-acid polypeptide reads, in one-letter code: Caffeoylpyruvate hydrolase (289 aa).

Positions 140, 142, and 171 each coordinate a divalent metal cation.

Belongs to the FAH family. Homodimer. Requires Mg(2+) as cofactor. Mn(2+) is required as a cofactor.

The enzyme catalyses (E)-caffeoylpyruvate + H2O = (E)-caffeate + pyruvate + H(+). The protein operates within secondary metabolite biosynthesis. Caffeoylpyruvate hydrolase; part of the gene cluster that mediates the fungal bioluminescence cycle. Involved in the recycling of oxyluciferin, a pyruvic acid adduct of caffeic acid, to caffeic acid. The fungal bioluminescence cycle begins with the hispidin synthetase that catalyzes the formation of hispidin which is further hydroxylated by the hispidin-3-hydroxylase, yielding the fungal luciferin 3-hydroxyhispidin. The luciferase then produces an endoperoxide as a high-energy intermediate with decomposition that yields oxyluciferin (also known as caffeoylpyruvate) and light emission. Oxyluciferin can be recycled to caffeic acid by caffeoylpyruvate hydrolase. The protein is Caffeoylpyruvate hydrolase of Neonothopanus nambi (Agaricus nambi).